Here is a 131-residue protein sequence, read N- to C-terminus: Lysosomal enzyme trafficking factor (131 aa).

Helical transmembrane passes span 8-28 and 66-86; these read MGWI…YYVF and LPFW…FLFL.

This sequence belongs to the LYSET family.

The protein localises to the golgi apparatus membrane. In terms of biological role, required for mannose-6-phosphate-dependent trafficking of lysosomal enzymes. LYSET bridges GlcNAc-1-phosphate transferase (GNPTAB), to the membrane-bound transcription factor site-1 protease (MBTPS1), thus allowing proteolytic activation of the GNPTAB. GNPTAB is involved in the regulation of M6P-dependent Golgi-to-lysosome trafficking of lysosomal enzymes. LYSET is thus an essential factor for maturation and delivery of lysosomal hydrolases. The polypeptide is Lysosomal enzyme trafficking factor (lyset-b) (Xenopus laevis (African clawed frog)).